A 106-amino-acid polypeptide reads, in one-letter code: MNDSEFHQLADQLMLNIEETLDDFDGDADIDYETNGGVMTLSFENGTKIVINRQEPLHQVWLATKTGGYHFNYRDGVWLCDRSDRAFYPLLSEAASAQAGEEVKFA.

This sequence belongs to the frataxin family.

Functionally, involved in iron-sulfur (Fe-S) cluster assembly. May act as a regulator of Fe-S biogenesis. The polypeptide is Iron-sulfur cluster assembly protein CyaY (Serratia proteamaculans (strain 568)).